Reading from the N-terminus, the 588-residue chain is Complement component C8 beta chain (588 aa).

A signal peptide spans 1–30 (MFRVAIPRSALNLHSCLLHVTLSLVLISKA). Positions 31–46 (AITTAGNEDSDVREAR) are excised as a propeptide. The 56-residue stretch at 58–113 (DCVISDWSAWSRCDTCQKKRYRYAKLDQPSQFGGEPCHFHDMEDEACDVPDRYTCD) folds into the TSP type-1 1 domain. 7 cysteine pairs are disulfide-bonded: Cys-59–Cys-94, Cys-70–Cys-104, Cys-73–Cys-112, Cys-118–Cys-129, Cys-123–Cys-142, Cys-136–Cys-151, and Cys-158–Cys-196. C-linked (Man) tryptophan glycans are attached at residues Trp-64 and Trp-67. An LDL-receptor class A domain is found at 115–152 (IPLCEGFLCTQTGRCIHRTLQCNGEDDCGDMSDEVGCK). Residues Leu-134, Asn-137, Glu-139, Asp-141, Asp-147, and Glu-148 each coordinate Ca(2+). In terms of domain architecture, MACPF spans 154–500 (VPKPCRQEAE…EYLAESSSCR (347 aa)). Beta stranded transmembrane passes span 248-255 (TIVSIGFA), 258-265 (GIAEFGFN), 375-382 (TQAGLKIG), and 388-395 (VYVSAGIE). Cystine bridges form between Cys-374–Cys-399, Cys-499–Cys-547, Cys-501–Cys-517, Cys-504–Cys-519, and Cys-521–Cys-530. One can recognise an EGF-like domain in the interval 501–531 (CAPCHNNGVAVLRGTRCDCVCPTGYTGRGCE). The TSP type-1 2 domain occupies 542–588 (DGSWSCWGAWSSCSGRKMSRSRQCNNPVPSDGGLACRGLQQESTDCF). C-linked (Man) tryptophan glycosylation is found at Trp-548 and Trp-551. Cys-554 and Cys-587 are joined by a disulfide.

This sequence belongs to the complement C6/C7/C8/C9 family. As to quaternary structure, heterotrimer of 3 chains: alpha (C8A), beta (C8B) and gamma (C8G); the alpha and gamma chains are disulfide bonded. Component of the membrane attack complex (MAC), composed of complement C5b, C6, C7, C8A, C8B, C8G and multiple copies of the pore-forming subunit C9.

It localises to the secreted. The protein localises to the target cell membrane. Its function is as follows. Component of the membrane attack complex (MAC), a multiprotein complex activated by the complement cascade, which inserts into a target cell membrane and forms a pore, leading to target cell membrane rupture and cell lysis. The MAC is initiated by proteolytic cleavage of C5 into complement C5b in response to the classical, alternative, lectin and GZMK complement pathways. The complement pathways consist in a cascade of proteins that leads to phagocytosis and breakdown of pathogens and signaling that strengthens the adaptive immune system. C8B, together with C8A and C8G, inserts into the target membrane, but does not form pores by itself. During MAC assembly, associates with C5b, C6 and C7 to form the C5b8 intermediate complex that inserts into the target membrane and traverses the bilayer increasing membrane rigidity. In Paralichthys olivaceus (Bastard halibut), this protein is Complement component C8 beta chain (c8b).